The sequence spans 325 residues: Bifunctional nuclease 2 (325 aa).

Residues 119-254 (CVHNNSQGRN…SLAYSDGIRS (136 aa)) form the BFN domain. Residues 285–320 (EAQEFGLIRNMLIAAVEERYKDAATWRDKLMLLRSK) form the UVR domain.

This sequence belongs to the bifunctional nuclease family.

It localises to the nucleus. Its function is as follows. Bifunctional nuclease with both RNase and DNase activities. Involved in basal defense response. Participates in abscisic acid-derived callose deposition following infection by a necrotrophic pathogen. This is Bifunctional nuclease 2 (BBD2) from Oryza sativa subsp. japonica (Rice).